A 462-amino-acid chain; its full sequence is ATP synthase subunit beta 1 (462 aa).

152–159 is an ATP binding site; that stretch reads GGAGVGKT.

It belongs to the ATPase alpha/beta chains family. F-type ATPases have 2 components, CF(1) - the catalytic core - and CF(0) - the membrane proton channel. CF(1) has five subunits: alpha(3), beta(3), gamma(1), delta(1), epsilon(1). CF(0) has four main subunits: a(1), b(1), b'(1) and c(9-12).

It localises to the cell inner membrane. It carries out the reaction ATP + H2O + 4 H(+)(in) = ADP + phosphate + 5 H(+)(out). In terms of biological role, produces ATP from ADP in the presence of a proton gradient across the membrane. The catalytic sites are hosted primarily by the beta subunits. The sequence is that of ATP synthase subunit beta 1 from Dinoroseobacter shibae (strain DSM 16493 / NCIMB 14021 / DFL 12).